We begin with the raw amino-acid sequence, 480 residues long: ATP synthase subunit beta (480 aa).

Position 152–159 (152–159) interacts with ATP; the sequence is GGAGVGKT.

This sequence belongs to the ATPase alpha/beta chains family. F-type ATPases have 2 components, CF(1) - the catalytic core - and CF(0) - the membrane proton channel. CF(1) has five subunits: alpha(3), beta(3), gamma(1), delta(1), epsilon(1). CF(0) has three main subunits: a(1), b(2) and c(9-12). The alpha and beta chains form an alternating ring which encloses part of the gamma chain. CF(1) is attached to CF(0) by a central stalk formed by the gamma and epsilon chains, while a peripheral stalk is formed by the delta and b chains.

The protein localises to the cell membrane. It catalyses the reaction ATP + H2O + 4 H(+)(in) = ADP + phosphate + 5 H(+)(out). Functionally, produces ATP from ADP in the presence of a proton gradient across the membrane. The catalytic sites are hosted primarily by the beta subunits. This Wolbachia sp. subsp. Brugia malayi (strain TRS) protein is ATP synthase subunit beta.